Consider the following 493-residue polypeptide: Xaa-Pro dipeptidase (493 aa).

An N-acetylalanine modification is found at A2. Phosphoserine is present on S167. H255 contributes to the a dipeptide binding site. The Mn(2+) site is built by D276, D287, and H370. An a dipeptide-binding site is contributed by D287. Residues H377 and R398 each contribute to the a dipeptide site. Mn(2+) contacts are provided by E412 and E452.

The protein belongs to the peptidase M24B family. Eukaryotic-type prolidase subfamily. Homodimer. It depends on Mn(2+) as a cofactor.

The enzyme catalyses Xaa-L-Pro dipeptide + H2O = an L-alpha-amino acid + L-proline. With respect to regulation, specifically inhibited by the pseudodipeptide CQ31. Inhibition by CQ31 indirectly activates the CARD8 inflammasome: dipeptide accumulation following PEPD inactivation weaky inhibit dipeptidyl peptidases DDP8 and DPP9, relieving DPP8- and/or DPP9-mediated inhibition of CARD8. Its function is as follows. Dipeptidase that catalyzes the hydrolysis of dipeptides with a prolyl (Xaa-Pro) or hydroxyprolyl residue in the C-terminal position. The preferred dipeptide substrate is Gly-Pro, but other Xaa-Pro dipeptides, such as Ala-Pro, Met-Pro, Phe-Pro, Val-Pro and Leu-Pro, can be cleaved. Plays an important role in collagen metabolism because the high level of iminoacids in collagen. The chain is Xaa-Pro dipeptidase from Homo sapiens (Human).